The chain runs to 1133 residues: RNA-dependent RNA polymerase 2 (1133 aa).

Residues Asp830, Asp832, and Asp834 each contribute to the Mg(2+) site.

Belongs to the RdRP family. In terms of assembly, interacts with NRPD1 and SHH1. Associates with Pol IV complex, forming an interpolymerase channel bridging their active sites, through which the Pol IV-generated transcript is handed over to the RDR2 active site after being backtracked, where it is used as the template for double-stranded RNA (dsRNA) synthesis. Interacts with JMJ24.

The protein resides in the nucleus. Its subcellular location is the nucleoplasm. The protein localises to the nucleolus. It carries out the reaction RNA(n) + a ribonucleoside 5'-triphosphate = RNA(n+1) + diphosphate. Functionally, RNA-dependent direct polymerase involved in the production of small interfering RNAs (siRNAs). Binds to single-stranded RNA (ssRNA); engages ssRNAs longer than 7 nucleotides and initiates internal to their 3' ends. Able to transcribe the RNA of an RNA/DNA hybrid, the transcript produced by Pol IV, if its 3' end is accessible, to generate double-stranded small interfering RNAs (dsRNAs) precursor essential for establishing and maintaining DNA methylation. Required for the biogenesis of endogenous siRNAs of 24 nucleotide which derive from heterochromatin and DNA repeats such as transposons or endogenous gene tandem repeats, such as repeats present in FWA gene. Involved in transcriptional gene silencing (TGS). Component of the RNA-directed DNA methylation (RdDM) silencing pathway that utilizes siRNAs to guide DNA methyltransferases to asymmetric cytosines. Involved in control of flowering time through RdDM of FWA locus. Required for reception of long-distance mRNA silencing in the shoot. Required for the formation of telomeric siRNAs and the RNA-dependent DNA methylation of asymmetric cytosines in telomeric (5'-CCCTAAA-3') repeats. This chain is RNA-dependent RNA polymerase 2, found in Arabidopsis thaliana (Mouse-ear cress).